The chain runs to 149 residues: Acyl carrier protein 1, chloroplastic (149 aa).

Residues 1–59 (MAHCLAAVSSFSPSAVRRRLSSQVANVVSSRSSVSFHSRQMSFVSISSRPSSLRFKICC) constitute a chloroplast transit peptide. The 76-residue stretch at 69–144 (KETVDKVCMI…DAANLIEKLV (76 aa)) folds into the Carrier domain. Ser-104 is modified (O-(pantetheine 4'-phosphoryl)serine).

It belongs to the acyl carrier protein (ACP) family. In terms of processing, 4'-phosphopantetheine is transferred from CoA to a specific serine of apo-ACP by acpS. This modification is essential for activity because fatty acids are bound in thioester linkage to the sulfhydryl of the prosthetic group.

The protein localises to the plastid. It localises to the chloroplast. Its pathway is lipid metabolism; fatty acid biosynthesis. Its function is as follows. Carrier of the growing fatty acid chain in fatty acid biosynthesis. This is Acyl carrier protein 1, chloroplastic (ACL1.1) from Hordeum vulgare (Barley).